The chain runs to 207 residues: Guanylate kinase (207 aa).

One can recognise a Guanylate kinase-like domain in the interval 4-184; that stretch reads GTLYIVSAPS…AQMDFRSIIR (181 aa). 11–18 provides a ligand contact to ATP; it reads APSGAGKS.

Belongs to the guanylate kinase family.

It localises to the cytoplasm. The enzyme catalyses GMP + ATP = GDP + ADP. In terms of biological role, essential for recycling GMP and indirectly, cGMP. This chain is Guanylate kinase, found in Aliivibrio fischeri (strain ATCC 700601 / ES114) (Vibrio fischeri).